A 590-amino-acid chain; its full sequence is Muscarinic acetylcholine receptor M3 (590 aa).

Residues 1–67 (MTLHNNSTTS…DPLGGHTVWQ (67 aa)) are Extracellular-facing. N-linked (GlcNAc...) asparagine glycans are attached at residues asparagine 5, asparagine 6, asparagine 15, asparagine 41, and asparagine 48. The helical transmembrane segment at 68–91 (VVFIAFLTGILALVTIIGNILVIV) threads the bilayer. Residues 92 to 104 (SFKVNKQLKTVNN) are Cytoplasmic-facing. A helical transmembrane segment spans residues 105-130 (YFLLSLACADLIIGVISMNLFTTYII). Residues 131-142 (MNRWALGNLACD) lie on the Extracellular side of the membrane. The cysteines at positions 141 and 221 are disulfide-linked. A helical membrane pass occupies residues 143 to 164 (LWLAIDYVASNASVMNLLVISF). Residues 165 to 184 (DRYFSITRPLTYRAKRTTKR) are Cytoplasmic-facing. Residues 185–206 (AGVMIGLAWVISFVLWAPAILF) traverse the membrane as a helical segment. At 207 to 229 (WQYFVGKRTVPPGECFIQFLSEP) the chain is on the extracellular side. A helical transmembrane segment spans residues 230–252 (TITFGTAIAAFYMPVTIMTILYW). The Cytoplasmic segment spans residues 253–491 (RIYKETEKRT…SLVKEKKAAQ (239 aa)). The Basolateral sorting signal motif lies at 275 to 281 (AETENFV). Residues 323-357 (SSEQMDQDHSSSDSWNNNDAAASLENSASSDEEDI) are disordered. Residues 334 to 345 (SDSWNNNDAAAS) are compositionally biased toward low complexity. Serine 385 carries the phosphoserine modification. A helical membrane pass occupies residues 492–514 (TLSAILLAFIITWTPYNIMVLVN). The Extracellular segment spans residues 515 to 526 (TFCDSCIPKTFW). Residues cysteine 517 and cysteine 520 are joined by a disulfide bond. Residues 527–546 (NLGYWLCYINSTVNPVCYAL) form a helical membrane-spanning segment. Topologically, residues 547 to 590 (CNKTFRTTFKMLLLCQCGKKKRRKQQYQQRQSVIFHKRAPEQAL) are cytoplasmic.

The protein belongs to the G-protein coupled receptor 1 family. Muscarinic acetylcholine receptor subfamily. CHRM3 sub-subfamily. As to quaternary structure, homodimer; the dimers can form tetramers. Interacts with NALCN. Interacts with TMEM147.

Its subcellular location is the cell membrane. The protein resides in the postsynaptic cell membrane. It is found in the basolateral cell membrane. The protein localises to the endoplasmic reticulum membrane. Functionally, the muscarinic acetylcholine receptor mediates various cellular responses, including inhibition of adenylate cyclase, breakdown of phosphoinositides and modulation of potassium channels through the action of G proteins. Primary transducing effect is Pi turnover. The sequence is that of Muscarinic acetylcholine receptor M3 (CHRM3) from Gorilla gorilla gorilla (Western lowland gorilla).